A 1241-amino-acid polypeptide reads, in one-letter code: Sterol 3-beta-glucosyltransferase (1241 aa).

Residues 1–11 show a composition bias toward acidic residues; sequence MSGIESTEEPC. Disordered regions lie at residues 1 to 97 and 124 to 189; these read MSGI…KPSI and DQQV…TLRK. Over residues 25-34 the composition is skewed to basic and acidic residues; it reads PEERQTRKDS. Residues 136-155 are compositionally biased toward acidic residues; that stretch reads ESEDQQADESSDEQEDDDQD. The 48-residue stretch at 220–267 folds into the GRAM 1 domain; the sequence is NKLKRTFDISDTDVFISDYPCWLMGDVLLQGHLYITKHHILFFAFLPK. In terms of domain architecture, PH spans 271-373; that stretch reads SISKSGALTT…WVSSLKKHIF (103 aa). The disordered stretch occupies residues 499-556; that stretch reads DDFSQEQESAESSKPVSDDEIVSADDNQELEEKQPQDNLANAEKENHDKVSRANSRRT. The segment covering 516–527 has biased composition (acidic residues); sequence DDEIVSADDNQE. Residues 540–549 show a composition bias toward basic and acidic residues; sequence AEKENHDKVS. The region spanning 609–675 is the GRAM 2 domain; that stretch reads ERFRKHFSLT…SDIENVNKEK (67 aa). A disordered region spans residues 720 to 741; the sequence is KGSTDSSPPNASEGSSDESCNL. Over residues 723–741 the composition is skewed to polar residues; sequence TDSSPPNASEGSSDESCNL. Positions 797, 798, 800, 1071, 1098, 1100, 1113, 1116, 1117, 1118, 1137, and 1138 each coordinate UDP-alpha-D-glucose.

It belongs to the glycosyltransferase 28 family.

The protein resides in the cytoplasm. Its subcellular location is the preautophagosomal structure membrane. It catalyses the reaction a sterol + UDP-alpha-D-glucose = a sterol 3-beta-D-glucoside + UDP + H(+). The catalysed reaction is ergosterol + UDP-alpha-D-glucose = ergosteryl 3-beta-D-glucoside + UDP + H(+). Its function is as follows. Sterol glycosyltransferase responsible for the glycosylation of ergosterol to form ergosterol-glucoside. Mediates autophagic degradation of peroxisomes (pexophagy). The polypeptide is Sterol 3-beta-glucosyltransferase (Pichia angusta (Yeast)).